A 132-amino-acid chain; its full sequence is Agouti-signaling protein (132 aa).

Residues 1 to 22 (MDVTRLLLATLLVFLCFFTAYS) form the signal peptide. N-linked (GlcNAc...) asparagine glycosylation occurs at Asn39. The segment at 62–88 (ISRKEAEKKRSSKKEASMKKVARPRTP) is disordered. Positions 63–79 (SRKEAEKKRSSKKEASM) are enriched in basic and acidic residues. 5 disulfides stabilise this stretch: Cys93/Cys108, Cys100/Cys114, Cys107/Cys125, Cys111/Cys132, and Cys116/Cys123. The region spanning 93–132 (CVATRDSCKPPAPACCDPCASCQCRFFRSACSCRVLSLNC) is the Agouti domain.

It localises to the secreted. Involved in the regulation of melanogenesis. The binding of ASP to MC1R precludes alpha-MSH initiated signaling and thus blocks production of cAMP, leading to a down-regulation of eumelanogenesis (brown/black pigment) and thus increasing synthesis of pheomelanin (yellow/red pigment). In Macaca radiata (Bonnet macaque), this protein is Agouti-signaling protein (ASIP).